A 591-amino-acid polypeptide reads, in one-letter code: Complement component C8 beta chain (591 aa).

A signal peptide spans 1 to 32 (MKNSRTWAWRAPVELFLLCAALGCLSLPGSRG). Residues 33 to 54 (ERPHSFGSNAVNKSFAKSRQMR) constitute a propeptide that is removed on maturation. The region spanning 64–117 (DCELSSWSSWTTCDPCQKKRYRYAYLLQPSQFHGEPCNFSDKEVEDCVTNRPCG) is the TSP type-1 1 domain. 7 disulfides stabilise this stretch: cysteine 65-cysteine 100, cysteine 76-cysteine 110, cysteine 79-cysteine 116, cysteine 122-cysteine 133, cysteine 127-cysteine 146, cysteine 140-cysteine 155, and cysteine 162-cysteine 200. C-linked (Man) tryptophan glycans are attached at residues tryptophan 70 and tryptophan 73. Asparagine 101 carries N-linked (GlcNAc...) asparagine glycosylation. Positions 120–157 (VRCEGFVCAQTGRCVNRRLLCNGDNDCGDQSDEANCRR) constitute an LDL-receptor class A domain. Ca(2+) contacts are provided by leucine 138, asparagine 141, aspartate 143, aspartate 145, aspartate 151, and glutamate 152. An MACPF domain is found at 158–504 (IYKKCQHEMD…EFQKEVSSCH (347 aa)). An N-linked (GlcNAc...) asparagine glycan is attached at asparagine 243. The next 4 membrane-spanning stretches (beta stranded) occupy residues 252–259 (SGFSFGFK), 262–269 (GIFELGIS), 379–386 (AKNDFKIG), and 392–399 (VYVSLGVS). Cysteine 378 and cysteine 403 form a disulfide bridge. Threonine 418 is subject to Phosphothreonine. 4 cysteine pairs are disulfide-bonded: cysteine 503/cysteine 550, cysteine 505/cysteine 521, cysteine 508/cysteine 523, and cysteine 525/cysteine 534. One can recognise an EGF-like domain in the interval 505–535 (CAPCQGNGVPVLKGSRCDCICPVGSQGLACE). The TSP type-1 2 domain maps to 545 to 591 (DGKWNCWSNWSSCSGRRKTRQRQCNNPPPQNGGSPCSGPASETLDCS). Residues tryptophan 551 and tryptophan 554 are each glycosylated (C-linked (Man) tryptophan). Cysteine 557 and cysteine 590 are disulfide-bonded. Positions 568–591 (CNNPPPQNGGSPCSGPASETLDCS) are disordered.

The protein belongs to the complement C6/C7/C8/C9 family. As to quaternary structure, heterotrimer of 3 chains: alpha (C8A), beta (C8B) and gamma (C8G); the alpha and gamma chains are disulfide bonded. Component of the membrane attack complex (MAC), composed of complement C5b, C6, C7, C8A, C8B, C8G and multiple copies of the pore-forming subunit C9. N-glycosylated; contains one or two bound glycans. Not O-glycosylated.

The protein resides in the secreted. The protein localises to the target cell membrane. With respect to regulation, membrane attack complex (MAC) assembly is inhibited by CD59, thereby protecting self-cells from damage during complement activation. CD59 acts by binding to the beta-haipins of C8 (C8A and C8B), forming an intermolecular beta-sheet that prevents incorporation of the multiple copies of C9 required for complete formation of the osmolytic pore. MAC assembly is also inhibited by clusterin (CLU) chaperones that inhibit polymerization of C9. Its function is as follows. Component of the membrane attack complex (MAC), a multiprotein complex activated by the complement cascade, which inserts into a target cell membrane and forms a pore, leading to target cell membrane rupture and cell lysis. The MAC is initiated by proteolytic cleavage of C5 into complement C5b in response to the classical, alternative, lectin and GZMK complement pathways. The complement pathways consist in a cascade of proteins that leads to phagocytosis and breakdown of pathogens and signaling that strengthens the adaptive immune system. C8B, together with C8A and C8G, inserts into the target membrane, but does not form pores by itself. During MAC assembly, associates with C5b, C6 and C7 to form the C5b8 intermediate complex that inserts into the target membrane and traverses the bilayer increasing membrane rigidity. This Homo sapiens (Human) protein is Complement component C8 beta chain.